We begin with the raw amino-acid sequence, 309 residues long: Ribonuclease Z (309 aa).

The Zn(2+) site is built by H63, H65, D67, H68, H145, D216, and H274. D67 functions as the Proton acceptor in the catalytic mechanism.

This sequence belongs to the RNase Z family. Homodimer. It depends on Zn(2+) as a cofactor.

The catalysed reaction is Endonucleolytic cleavage of RNA, removing extra 3' nucleotides from tRNA precursor, generating 3' termini of tRNAs. A 3'-hydroxy group is left at the tRNA terminus and a 5'-phosphoryl group is left at the trailer molecule.. Zinc phosphodiesterase, which displays some tRNA 3'-processing endonuclease activity. Probably involved in tRNA maturation, by removing a 3'-trailer from precursor tRNA. This is Ribonuclease Z from Streptococcus sanguinis (strain SK36).